The primary structure comprises 196 residues: Adenylate kinase (196 aa).

Gly9 to Thr17 contacts ATP.

This sequence belongs to the archaeal adenylate kinase family.

The protein resides in the cytoplasm. The catalysed reaction is AMP + ATP = 2 ADP. This Thermococcus sibiricus (strain DSM 12597 / MM 739) protein is Adenylate kinase.